The sequence spans 145 residues: Deoxyuridine 5'-triphosphate nucleotidohydrolase (145 aa).

Substrate contacts are provided by residues 64–66, N77, 81–83, and M91; these read RSG and TID.

It belongs to the dUTPase family. Requires Mg(2+) as cofactor.

The catalysed reaction is dUTP + H2O = dUMP + diphosphate + H(+). The protein operates within pyrimidine metabolism; dUMP biosynthesis; dUMP from dCTP (dUTP route): step 2/2. Its function is as follows. This enzyme is involved in nucleotide metabolism: it produces dUMP, the immediate precursor of thymidine nucleotides and it decreases the intracellular concentration of dUTP so that uracil cannot be incorporated into DNA. The polypeptide is Deoxyuridine 5'-triphosphate nucleotidohydrolase (Leptospira borgpetersenii serovar Hardjo-bovis (strain JB197)).